The sequence spans 501 residues: ATP synthase subunit alpha, chloroplastic (501 aa).

170–177 (GDRQTGKT) is a binding site for ATP.

Belongs to the ATPase alpha/beta chains family. In terms of assembly, F-type ATPases have 2 components, CF(1) - the catalytic core - and CF(0) - the membrane proton channel. CF(1) has five subunits: alpha(3), beta(3), gamma(1), delta(1), epsilon(1). CF(0) has four main subunits: a, b, b' and c.

Its subcellular location is the plastid. It is found in the chloroplast thylakoid membrane. It carries out the reaction ATP + H2O + 4 H(+)(in) = ADP + phosphate + 5 H(+)(out). Its function is as follows. Produces ATP from ADP in the presence of a proton gradient across the membrane. The alpha chain is a regulatory subunit. The sequence is that of ATP synthase subunit alpha, chloroplastic from Pisum sativum (Garden pea).